An 86-amino-acid chain; its full sequence is Large ribosomal subunit protein bL27 (86 aa).

Residues 1-26 (MATKKAGGSSRNGRDSAGRRLGVKQS) are disordered.

Belongs to the bacterial ribosomal protein bL27 family.

This Rickettsia canadensis (strain McKiel) protein is Large ribosomal subunit protein bL27.